The sequence spans 704 residues: DNA ligase (704 aa).

Residues 44 to 48 (DYEYD), 93 to 94 (SI), and glutamate 125 contribute to the NAD(+) site. The active-site N6-AMP-lysine intermediate is lysine 127. Arginine 148, glutamate 184, lysine 300, and lysine 324 together coordinate NAD(+). Residues cysteine 418, cysteine 421, cysteine 436, and cysteine 442 each coordinate Zn(2+). The BRCT domain maps to 625–704 (IISSNISGKI…DEWEHLINEK (80 aa)).

It belongs to the NAD-dependent DNA ligase family. LigA subfamily. Mg(2+) is required as a cofactor. Mn(2+) serves as cofactor.

The catalysed reaction is NAD(+) + (deoxyribonucleotide)n-3'-hydroxyl + 5'-phospho-(deoxyribonucleotide)m = (deoxyribonucleotide)n+m + AMP + beta-nicotinamide D-nucleotide.. In terms of biological role, DNA ligase that catalyzes the formation of phosphodiester linkages between 5'-phosphoryl and 3'-hydroxyl groups in double-stranded DNA using NAD as a coenzyme and as the energy source for the reaction. It is essential for DNA replication and repair of damaged DNA. This chain is DNA ligase, found in Pelobacter propionicus (strain DSM 2379 / NBRC 103807 / OttBd1).